A 347-amino-acid chain; its full sequence is uncharacterized protein (347 aa).

Disordered stretches follow at residues 1–40, 72–92, 133–158, 173–209, and 306–347; these read MAQE…SNSM, SCED…IQGS, SDST…QLTL, ENQK…QVSH, and EDPR…PPDF. Polar residues predominate over residues 15–25; sequence PGQNITETTTD. A compositionally biased stretch (basic and acidic residues) spans 143-154; that stretch reads GDNKDKHPKEKT. Positions 179–194 are enriched in acidic residues; sequence KDDDSVFPESAQEEDS. Over residues 195-209 the composition is skewed to polar residues; it reads QLPSSSLPGMAQVSH. Over residues 306–318 the composition is skewed to basic and acidic residues; that stretch reads EDPREANERPREL. Basic residues predominate over residues 319-330; that stretch reads ARKKRFSYRSKR.

This is an uncharacterized protein from Bos taurus (Bovine).